An 879-amino-acid polypeptide reads, in one-letter code: Valine--tRNA ligase (879 aa).

The 'HIGH' region signature appears at 45–55 (PNVTGKLHLGH). Positions 521 to 525 (KMSKS) match the 'KMSKS' region motif. Position 524 (Lys-524) interacts with ATP. Residues 806–879 (LTELVNVDEE…ERMKELKESK (74 aa)) adopt a coiled-coil conformation.

It belongs to the class-I aminoacyl-tRNA synthetase family. ValS type 1 subfamily. As to quaternary structure, monomer.

The protein localises to the cytoplasm. It carries out the reaction tRNA(Val) + L-valine + ATP = L-valyl-tRNA(Val) + AMP + diphosphate. In terms of biological role, catalyzes the attachment of valine to tRNA(Val). As ValRS can inadvertently accommodate and process structurally similar amino acids such as threonine, to avoid such errors, it has a 'posttransfer' editing activity that hydrolyzes mischarged Thr-tRNA(Val) in a tRNA-dependent manner. The chain is Valine--tRNA ligase from Lactobacillus johnsonii (strain CNCM I-12250 / La1 / NCC 533).